A 1470-amino-acid chain; its full sequence is Actin cytoskeleton-regulatory complex protein pan1 (1470 aa).

Residues 1–157 (MYSSSNSFLG…PPPKSSGSKI (157 aa)) are disordered. The segment covering 25-48 (QPPYSQFPQGQQQIPQQTGFQPQP) has biased composition (low complexity). Polar residues predominate over residues 54–75 (QSASHLQPQPTGFPTGQLQPQF). Residues 77–101 (GFPGAAPQQQQQQLGGYQAPAQQPQ) are compositionally biased toward low complexity. The span at 129 to 139 (RTSSEIANSFS) shows a compositional bias: polar residues. The region spanning 169 to 257 (DQAKFEQLFK…DKIKNEVSSM (89 aa)) is the EH 1 domain. Residues 201 to 236 (LPGSELSKIWVLSDTTKSGQLFFPEFALAMYLCNLR) form the EF-hand 1 domain. Disordered stretches follow at residues 282-305 (DAPL…QPSN) and 343-377 (QATG…GPRP). Over residues 292 to 301 (PPAPQHPKPQ) the composition is skewed to pro residues. Over residues 348–360 (PGQSQQQYLQPQP) the composition is skewed to low complexity. One can recognise an EH 2 domain in the interval 458 to 547 (EKKIYDDLFR…PELIPPSTRN (90 aa)). Residues 491–526 (LDRKDLERIWTLADPNNRGRLNMDEFAVAMHLIYRK) enclose the EF-hand 2 domain. Disordered regions lie at residues 614-641 (GYRS…SEEE), 794-864 (ELAG…HERR), 886-1087 (GSRT…LKEK), and 1099-1470 (EQVR…RVLD). Low complexity predominate over residues 627–637 (ARPSSPAASQA). The stretch at 633–758 (AASQASEEEL…LFRLKDAKAH (126 aa)) forms a coiled coil. 2 stretches are compositionally biased toward basic and acidic residues: residues 809–864 (AAAR…HERR) and 892–910 (VRKE…HEEP). Low complexity predominate over residues 917–932 (LSPAPSAGSAGSLPGS). 5 stretches are compositionally biased toward basic and acidic residues: residues 933–951 (THED…RIAE), 971–1006 (RQER…EEQR), 1052–1087 (AARE…LKEK), 1099–1127 (EQVR…EKEA), and 1134–1146 (AEIE…ERQL). Positions 963-1159 (DTSETLLQRQ…LEGLDEESSS (197 aa)) form a coiled coil. Residues 1151–1163 (EGLDEESSSDDEG) show a composition bias toward acidic residues. Residues 1169-1180 (PEDSTPTQSQLL) are compositionally biased toward polar residues. The span at 1181–1195 (PTVTPAAPVSAPESE) shows a compositional bias: low complexity. The span at 1243–1269 (PNVTSPRADVHSTNPFHRLAQQESSKP) shows a compositional bias: polar residues. Over residues 1277-1286 (LERKSRARPE) the composition is skewed to basic and acidic residues. Over residues 1340-1352 (SKSSTPVQDSPVT) the composition is skewed to polar residues. Pro residues-rich tracts occupy residues 1367–1380 (AAPP…PPAA) and 1389–1433 (APPP…PTPA). The 18-residue stretch at 1437–1454 (DRSALLASIQMGKGLRKV) folds into the WH2 domain. Polar residues predominate over residues 1457–1470 (NDRSTSSSAGRVLD).

It belongs to the PAN1 family. In terms of assembly, component of the PAN1 actin cytoskeleton-regulatory complex.

It is found in the cell membrane. Its subcellular location is the endosome membrane. It localises to the cytoplasm. The protein resides in the cytoskeleton. The protein localises to the actin patch. Component of the PAN1 actin cytoskeleton-regulatory complex required for the internalization of endosomes during actin-coupled endocytosis. The complex links the site of endocytosis to the cell membrane-associated actin cytoskeleton. Mediates uptake of external molecules and vacuolar degradation of plasma membrane proteins. Plays a role in the proper organization of the cell membrane-associated actin cytoskeleton and promotes its destabilization. This Neosartorya fischeri (strain ATCC 1020 / DSM 3700 / CBS 544.65 / FGSC A1164 / JCM 1740 / NRRL 181 / WB 181) (Aspergillus fischerianus) protein is Actin cytoskeleton-regulatory complex protein pan1 (pan1).